Consider the following 521-residue polypeptide: Cyclic AMP-responsive element-binding protein 3-like protein 2 (521 aa).

Over M1–T378 the chain is Cytoplasmic. A compositionally biased stretch (polar residues) spans Y83–S103. A disordered region spans residues Y83–D106. S93 carries the post-translational modification Phosphoserine. Residue K178 forms a Glycyl lysine isopeptide (Lys-Gly) (interchain with G-Cter in SUMO2) linkage. Position 191 is a phosphoserine (S191). Positions S196–L264 are disordered. Over residues S208–P220 the composition is skewed to low complexity. The 64-residue stretch at A294–L357 folds into the bZIP domain. The segment at K296–K325 is basic motif. A leucine-zipper region spans residues L336–L357. The chain crosses the membrane as a helical; Signal-anchor for type II membrane protein span at residues C379–G399. The Lumenal portion of the chain corresponds to P400–F521. The S1P recognition signature appears at R427–L430. N481, N505, and N518 each carry an N-linked (GlcNAc...) asparagine glycan.

The protein belongs to the bZIP family. ATF subfamily. As to quaternary structure, binds DNA as a dimer. Post-translationally, upon ER stress, translocated to the Golgi apparatus, where it is processed by regulated intramembrane proteolysis (RIP) to release the cytosol-facing N-terminal transcription factor domain. The cleavage is performed sequentially by site-1 and site-2 proteases (S1P/MBTPS1 and S2P/MBTPS2). N-glycosylated. In terms of processing, ubiquitinated by HRD1/SYVN1; undergoes 'Lys-48'-linked ubiquitination, followed by rapid proteasomal degradation under normal conditions. Upon ER stress, SYVN1 E3 ubiquitin-protein ligase dissociates from its substrate, ubiquitination does not occur and CREB3L2 is stabilized. In terms of tissue distribution, widely expressed, including in lung, bladder, ovary, testis and spleen. Highly expressed in chondrocytes.

It is found in the endoplasmic reticulum membrane. It localises to the nucleus. Its function is as follows. Transcription factor involved in unfolded protein response (UPR). In the absence of endoplasmic reticulum (ER) stress, inserted into ER membranes, with N-terminal DNA-binding and transcription activation domains oriented toward the cytosolic face of the membrane. In response to ER stress, transported to the Golgi, where it is cleaved in a site-specific manner by resident proteases S1P/MBTPS1 and S2P/MBTPS2. The released N-terminal cytosolic domain is translocated to the nucleus to effect transcription of specific target genes. Plays a critical role in chondrogenesis by activating the transcription of SEC23A, which promotes the transport and secretion of cartilage matrix proteins, and possibly that of ER biogenesis-related genes. In a neuroblastoma cell line, protects cells from ER stress-induced death. In vitro activates transcription of target genes via direct binding to the CRE site. In Mus musculus (Mouse), this protein is Cyclic AMP-responsive element-binding protein 3-like protein 2 (Creb3l2).